The following is a 269-amino-acid chain: Photosystem I assembly factor PSA3, chloroplastic (269 aa).

A chloroplast-targeting transit peptide spans 1–37 (MGALPVAHSLALTAAFLPCRRPAAHGRCRRRRYRAVV).

It is found in the plastid. It localises to the chloroplast thylakoid membrane. Functionally, nuclear genome-encoded factor required for the accumulation of photosystem I (PSI). Functions as a PSI biogenesis factor. Cooperates with PYG7 to promote the stable assembly of PSI in the thylakoid membrane. May target primarily the PsaC subunit. Does not seem to be required for the expression of chloroplast genes encoding PSI subunits. The sequence is that of Photosystem I assembly factor PSA3, chloroplastic from Zea mays (Maize).